Consider the following 252-residue polypeptide: Ribosomal RNA small subunit methyltransferase A (252 aa).

Residues Asn11, Leu13, Gly38, Glu60, Asp82, and Asn99 each coordinate S-adenosyl-L-methionine.

It belongs to the class I-like SAM-binding methyltransferase superfamily. rRNA adenine N(6)-methyltransferase family. RsmA subfamily.

Its subcellular location is the cytoplasm. The enzyme catalyses adenosine(1518)/adenosine(1519) in 16S rRNA + 4 S-adenosyl-L-methionine = N(6)-dimethyladenosine(1518)/N(6)-dimethyladenosine(1519) in 16S rRNA + 4 S-adenosyl-L-homocysteine + 4 H(+). Specifically dimethylates two adjacent adenosines (A1518 and A1519) in the loop of a conserved hairpin near the 3'-end of 16S rRNA in the 30S particle. May play a critical role in biogenesis of 30S subunits. This chain is Ribosomal RNA small subunit methyltransferase A, found in Hydrogenobaculum sp. (strain Y04AAS1).